The chain runs to 101 residues: NAD(P)H-quinone oxidoreductase subunit 4L, chloroplastic (101 aa).

The next 3 membrane-spanning stretches (helical) occupy residues 2–22 (MLEHILVLSAYLFSIGIYGLI), 32–52 (MCLELIFNSVNINFVTFSGFF), and 61–81 (IFSVFVFAIAAAEAAIGLAIV).

The protein belongs to the complex I subunit 4L family. NDH is composed of at least 16 different subunits, 5 of which are encoded in the nucleus.

Its subcellular location is the plastid. The protein resides in the chloroplast thylakoid membrane. It catalyses the reaction a plastoquinone + NADH + (n+1) H(+)(in) = a plastoquinol + NAD(+) + n H(+)(out). It carries out the reaction a plastoquinone + NADPH + (n+1) H(+)(in) = a plastoquinol + NADP(+) + n H(+)(out). Its function is as follows. NDH shuttles electrons from NAD(P)H:plastoquinone, via FMN and iron-sulfur (Fe-S) centers, to quinones in the photosynthetic chain and possibly in a chloroplast respiratory chain. The immediate electron acceptor for the enzyme in this species is believed to be plastoquinone. Couples the redox reaction to proton translocation, and thus conserves the redox energy in a proton gradient. The sequence is that of NAD(P)H-quinone oxidoreductase subunit 4L, chloroplastic from Jasminum nudiflorum (Winter jasmine).